The chain runs to 450 residues: Phosphoglucosamine mutase (450 aa).

Serine 102 acts as the Phosphoserine intermediate in catalysis. Mg(2+) is bound by residues serine 102, aspartate 243, aspartate 245, and aspartate 247. Residue serine 102 is modified to Phosphoserine.

It belongs to the phosphohexose mutase family. It depends on Mg(2+) as a cofactor. In terms of processing, activated by phosphorylation.

The catalysed reaction is alpha-D-glucosamine 1-phosphate = D-glucosamine 6-phosphate. In terms of biological role, catalyzes the conversion of glucosamine-6-phosphate to glucosamine-1-phosphate. The polypeptide is Phosphoglucosamine mutase (Rhizobium leguminosarum bv. trifolii (strain WSM2304)).